A 1141-amino-acid polypeptide reads, in one-letter code: Myosin-binding protein C, slow-type (1141 aa).

Residues 1 to 10 (MPEPTKKEEN) are compositionally biased toward basic and acidic residues. The tract at residues 1-51 (MPEPTKKEENEVPAPAPPPEEPSKEKEAGTTPAKDWTLVETPPGEEQAKQN) is disordered. 5 Ig-like C2-type domains span residues 72-144 (GEDI…RCEV), 251-340 (SAAF…VREP), 341-431 (PIMV…VDLK), 432-520 (PLKI…HVID), and 522-619 (PKII…VVDF). T406 carries the post-translational modification Phosphothreonine. S611 carries the post-translational modification Phosphoserine. Fibronectin type-III domains follow at residues 622-721 (PPVA…TSPP) and 722-833 (TLLT…VKEI). A Phosphothreonine modification is found at T798. Y823 carries the phosphotyrosine modification. One can recognise an Ig-like C2-type 6 domain in the interval 837–931 (PKIRIPRHLK…ASIDIQIIDR (95 aa)). The region spanning 934–1029 (PPQIVKIEDV…TKESAVIARD (96 aa)) is the Fibronectin type-III 3 domain. The Ig-like C2-type 7 domain occupies 1047–1141 (PMFTQPLVNT…CKLEVKVIAQ (95 aa)).

It belongs to the immunoglobulin superfamily. MyBP family. Interacts with USP25 (isoform USP25m only); the interaction prevents proteasomal degradation of MYBPC1.

In terms of biological role, thick filament-associated protein located in the crossbridge region of vertebrate striated muscle a bands. Slow skeletal protein that binds to both myosin and actin. In vitro, binds to native thin filaments and modifies the activity of actin-activated myosin ATPase. May modulate muscle contraction or may play a more structural role. The protein is Myosin-binding protein C, slow-type (MYBPC1) of Homo sapiens (Human).